A 605-amino-acid chain; its full sequence is MGGCFSKPKPVELKIEVVLPEKERGKEELSASGKGSPRAYQGNGTARHFHTEERLSTPHPYPSPQDCVEAAVCHVKDLENGQMREVELGWGKVLLVKDNGEFHALGHKCPHYGAPLVKGVLSRGRVRCPWHGACFNISTGDLEDFPGLDSLHKFQVKIEKEKVYVRASKQALQLQRRTKVMAKCISPSAGYSSSTNVLIVGAGAAGLVCAETLRQEGFSDRIVLCTLDRHLPYDRPKLSKSLDTQPEQLALRPKEFFRAYGIEVLTEAQVVTVDVRTKKVVFKDGFKLEYSKLLLAPGSSPKTLSCKGKEVENVFTIRTPEDANRVVRLARGRNVVVVGAGFLGMEVAAYLTEKAHSVSVVELEETPFRRFLGERVGRALMKMFENNRVKFYMQTEVSELRGQEGKLKEVVLKSSKVVRADVCVVGIGAVPATGFLRQSGIGLDSRGFIPVNKMMQTNVPGVFAAGDAVTFPLAWRNNRKVNIPHWQMAHAQGRVAAQNMLAQEAEMSTVPYLWTAMFGKSLRYAGYGEGFDDVIIQGDLEELKFVAFYTKGDEVIAVASMNYDPIVSKVAEVLASGRAIRKREVELFVLHSKTGDMSWLTGKGS.

The tract at residues 22–45 (KERGKEELSASGKGSPRAYQGNGT) is disordered. In terms of domain architecture, Rieske spans 70-165 (AAVCHVKDLE…VKIEKEKVYV (96 aa)). 4 residues coordinate [2Fe-2S] cluster: Cys-109, His-111, Cys-128, and His-131. FAD-binding positions include 201–205 (GAGAA), Arg-235, Lys-240, Val-270, Asp-467, and Trp-514.

The protein belongs to the FAD-dependent oxidoreductase family. In terms of tissue distribution, ubiquitous. Expressed in bone marrow, cerebral cortex, liver, ovary, thymus, thyroid gland and tongue (at protein level).

It is found in the mitochondrion. In terms of biological role, induces apoptosis through a caspase dependent pathway. Reduces mitochondrial membrane potential. In Homo sapiens (Human), this protein is Apoptosis-inducing factor 3 (AIFM3).